Here is an 847-residue protein sequence, read N- to C-terminus: Mitogen-activated protein kinase kinase kinase 11 (847 aa).

Position 11 is a phosphoserine (Ser11). Residues 11–38 (SPLGSWNGSGSGGGGGGGGGRPEGSPKA) form a disordered region. The segment covering 17–32 (NGSGSGGGGGGGGGRP) has biased composition (gly residues). Position 35 is a phosphoserine (Ser35). In terms of domain architecture, SH3 spans 41–105 (YANPVWTALF…PSNYVSRGGG (65 aa)). Residues 117-379 (LRLEEVIGIG…ASILQQLEAL (263 aa)) enclose the Protein kinase domain. Residues 123 to 131 (IGIGGFGKV) and Lys144 each bind ATP. Asp241 acts as the Proton acceptor in catalysis. Phosphothreonine; by autocatalysis is present on Thr277. Ser281 carries the phosphoserine; by autocatalysis and MAP4K1 modification. The residue at position 394 (Ser394) is a Phosphoserine. Leucine-zipper stretches follow at residues 403–424 (IQGLFDELRAKEKELLSREEEL) and 438–459 (LRRREHLLAQWELEVFERELTL). Phosphoserine is present on residues Ser507, Ser524, Ser548, Ser555, and Ser556. Residues 537 to 643 (PAEPGQAWGR…SSGTPKLIQR (107 aa)) form a disordered region. Over residues 550–562 (RRLEDSSNGERRA) the composition is skewed to basic and acidic residues. Residues 597-609 (SSPLGSPSTPPAL) show a composition bias toward low complexity. 3 positions are modified to phosphoserine: Ser654, Ser693, and Ser705. Positions 655 to 847 (LGLGRDLQPP…QAPWVPEAGP (193 aa)) are disordered. Over residues 676–694 (TTPPTPTPAPCPTEPPPSP) the composition is skewed to pro residues. Thr708 is modified (phosphothreonine). Ser724, Ser727, Ser740, Ser748, Ser758, Ser770, Ser789, Ser793, and Ser815 each carry phosphoserine. Residues 760–773 (PLGLISRPRPSPLR) show a composition bias toward low complexity. Over residues 787–799 (RPSPLPSPQPAPR) the composition is skewed to pro residues. Residues 800–816 (RAPWTLFPDSDPFWDSP) are compositionally biased toward low complexity.

Belongs to the protein kinase superfamily. STE Ser/Thr protein kinase family. MAP kinase kinase kinase subfamily. In terms of assembly, homodimer; undergoes dimerization during activation. Interacts with MAP2K4/MKK4. Interacts with MAP2K7/MKK7. Found in a complex with SH3RF1, RAC1, MAP2K7/MKK7, MAPK8IP1/JIP1 and MAPK8/JNK1. It depends on Mg(2+) as a cofactor. In terms of processing, autophosphorylation on serine and threonine residues within the activation loop plays a role in enzyme activation. Thr-277 is likely to be the main autophosphorylation site. Phosphorylation of Ser-555 and Ser-556 is induced by CDC42. As to expression, expressed in a wide variety of normal and neoplastic tissues including fetal lung, liver, heart and kidney, and adult lung, liver, heart, kidney, placenta, skeletal muscle, pancreas and brain.

Its subcellular location is the cytoplasm. It is found in the cytoskeleton. The protein localises to the microtubule organizing center. It localises to the centrosome. It carries out the reaction L-seryl-[protein] + ATP = O-phospho-L-seryl-[protein] + ADP + H(+). The catalysed reaction is L-threonyl-[protein] + ATP = O-phospho-L-threonyl-[protein] + ADP + H(+). Homodimerization via the leucine zipper domains is required for autophosphorylation and subsequent activation. Its function is as follows. Activates the JUN N-terminal pathway. Required for serum-stimulated cell proliferation and for mitogen and cytokine activation of MAPK14 (p38), MAPK3 (ERK) and MAPK8 (JNK1) through phosphorylation and activation of MAP2K4/MKK4 and MAP2K7/MKK7. Plays a role in mitogen-stimulated phosphorylation and activation of BRAF, but does not phosphorylate BRAF directly. Influences microtubule organization during the cell cycle. In Homo sapiens (Human), this protein is Mitogen-activated protein kinase kinase kinase 11.